The primary structure comprises 174 residues: Ribosome maturation factor RimM (174 aa).

Residues 95–174 (DDEFYWRDLI…QIQVEWPSDF (80 aa)) form the PRC barrel domain.

This sequence belongs to the RimM family. In terms of assembly, binds ribosomal protein uS19.

The protein localises to the cytoplasm. In terms of biological role, an accessory protein needed during the final step in the assembly of 30S ribosomal subunit, possibly for assembly of the head region. Essential for efficient processing of 16S rRNA. May be needed both before and after RbfA during the maturation of 16S rRNA. It has affinity for free ribosomal 30S subunits but not for 70S ribosomes. This Idiomarina loihiensis (strain ATCC BAA-735 / DSM 15497 / L2-TR) protein is Ribosome maturation factor RimM.